A 181-amino-acid chain; its full sequence is Transcription termination/antitermination protein NusG (181 aa).

The KOW domain maps to 130–158; the sequence is PGETVRVNDGPFSDFNGIVEEVDYEKNRL.

The protein belongs to the NusG family. In terms of assembly, monomer. Interacts with the transcription termination factor Rho and with RNA polymerase.

Its function is as follows. Participates in transcription elongation, termination and antitermination. In the absence of Rho, increases the rate of transcription elongation by the RNA polymerase (RNAP), probably by partially suppressing pausing. In the presence of Rho, modulates most Rho-dependent termination events by interacting with the RNAP to render the complex more susceptible to the termination activity of Rho. May be required to overcome a kinetic limitation of Rho to function at certain terminators. Also involved in ribosomal RNA transcriptional antitermination. This chain is Transcription termination/antitermination protein NusG, found in Buchnera aphidicola subsp. Baizongia pistaciae (strain Bp).